A 447-amino-acid polypeptide reads, in one-letter code: C4-dicarboxylate transport protein 3 (447 aa).

8 consecutive transmembrane segments (helical) span residues 5 to 27 (TLGKLYVQVLIGVAAGIVQGVAA), 42 to 64 (IKLIKMVFAPIIFATVTLGIARM), 77 to 99 (ALVYFEVLSTFALALGLIVVNLV), 146 to 165 (LARNDILQILVFATLFGIAL), 186 to 208 (VFSIVGMIMRLAPIAAFGAMAFT), 223 to 245 (LMATMYLTCVLFVAIVLGGVARL), 315 to 337 (IFVAQATNTPLTLTDQLVVLGVL), and 352 to 374 (FITLAATLASLGKIPVAGMVLLL).

Belongs to the dicarboxylate/amino acid:cation symporter (DAACS) (TC 2.A.23) family.

The protein resides in the cell inner membrane. In terms of biological role, responsible for the transport of dicarboxylates such as succinate, fumarate, and malate from the periplasm across the membrane. The polypeptide is C4-dicarboxylate transport protein 3 (dctA3) (Ralstonia nicotianae (strain ATCC BAA-1114 / GMI1000) (Ralstonia solanacearum)).